The primary structure comprises 268 residues: Glutamate racemase (268 aa).

Substrate-binding positions include 9 to 10 (DS) and 41 to 42 (YG). The Proton donor/acceptor role is filled by Cys73. 74-75 (NS) contributes to the substrate binding site. Cys183 serves as the catalytic Proton donor/acceptor. 184-185 (TH) contacts substrate.

This sequence belongs to the aspartate/glutamate racemases family.

The catalysed reaction is L-glutamate = D-glutamate. It participates in cell wall biogenesis; peptidoglycan biosynthesis. In terms of biological role, provides the (R)-glutamate required for cell wall biosynthesis. In Shewanella pealeana (strain ATCC 700345 / ANG-SQ1), this protein is Glutamate racemase.